Here is a 305-residue protein sequence, read N- to C-terminus: Type II restriction enzyme SsoII (305 aa).

The catalysed reaction is Endonucleolytic cleavage of DNA to give specific double-stranded fragments with terminal 5'-phosphates.. Its function is as follows. A P subtype restriction enzyme that recognizes the double-stranded sequence 5'-CCNGG-3' and cleaves before C-1. The protein is Type II restriction enzyme SsoII (ssoIIR) of Shigella sonnei.